We begin with the raw amino-acid sequence, 245 residues long: Terpene cyclase esdpB (245 aa).

The next 7 helical transmembrane spans lie at 19 to 39, 48 to 68, 75 to 95, 112 to 132, 140 to 160, 177 to 197, and 208 to 228; these read MVASIFLISGTGWIVNYVTTI, SGVTLLSLCNNLAWETVFAVI, IAALVITVWLLVNIYVIYVSV, LPVVTLLGFVGFLTGHIALSM, LYWGGMICQVTLSASALGLLI, FIASSFGVPGLFVRAVYWPSA, and WLSGVFFLLDLSYGAIYYHIS.

The protein belongs to the paxB family.

It is found in the membrane. The protein operates within secondary metabolite biosynthesis; terpenoid biosynthesis. Functionally, terpene cyclase; part of the cluster that mediates the biosynthesis of shearones, diterpenoid pyrones (DPs) which are structurally diverse meroterpenoids consisting of a diterpene linked by a pyrone, and which may exhibit a range of bioactivities. Within the pathway, esdpB takes part to the biosynthesis of the molecular scaffold by catalyzing the cyclization of the prenyl group initiated by protonation and ring-opening of the epoxide to produce the diterpenoid pyrone scaffold. The molecular scaffold is commonly biosynthesized by a series of enzymes including the non-reducing polyketide synthase (NR-PKS) esdpA that generates an alpha-pyrone; the prenyltransferase esdpC that attaches a geranylgeranyl pyrophosphate (GGPP) produced by the GGPP synthase (GGPPS) esdpD onto the pyrone unit; the FAD-dependent monooxygenase esdpE that converts an olefin on the diterpene unit into an epoxide; and the terpene cyclase esdpB that catalyzes the cyclization reactions to give the molecular backbone shearone A. In the modification steps, esdpF oxidizes the hydroxy group to a ketone at C-3 and esdpG then attaches hydroxy groups at both C-11 and C-12. After that, esdpI hydroxylates at C-20 and esdpH hydroxylates at C-6'. The ether bridge is generated by nucleophilic attack of the hydroxy group at C-20 to the carbonyl carbon at C-3. EsdpH can also functions prior to esdpI. The different combinations of these modification enzymes lead to the production of diverse shearone derivatives, shearone I being the end product of the pathway. The alpha-ketoglutarate-dependent dioxygenase esdpJ seems not to be involved in this pathway. In Penicillium shearii (Eupenicillium shearii), this protein is Terpene cyclase esdpB.